Consider the following 292-residue polypeptide: Phosphatidylserine decarboxylase proenzyme (292 aa).

Catalysis depends on charge relay system; for autoendoproteolytic cleavage activity residues D92, H149, and S255. S255 acts as the Schiff-base intermediate with substrate; via pyruvic acid; for decarboxylase activity in catalysis. Residue S255 is modified to Pyruvic acid (Ser); by autocatalysis.

This sequence belongs to the phosphatidylserine decarboxylase family. PSD-B subfamily. Prokaryotic type I sub-subfamily. Heterodimer of a large membrane-associated beta subunit and a small pyruvoyl-containing alpha subunit. It depends on pyruvate as a cofactor. Is synthesized initially as an inactive proenzyme. Formation of the active enzyme involves a self-maturation process in which the active site pyruvoyl group is generated from an internal serine residue via an autocatalytic post-translational modification. Two non-identical subunits are generated from the proenzyme in this reaction, and the pyruvate is formed at the N-terminus of the alpha chain, which is derived from the carboxyl end of the proenzyme. The autoendoproteolytic cleavage occurs by a canonical serine protease mechanism, in which the side chain hydroxyl group of the serine supplies its oxygen atom to form the C-terminus of the beta chain, while the remainder of the serine residue undergoes an oxidative deamination to produce ammonia and the pyruvoyl prosthetic group on the alpha chain. During this reaction, the Ser that is part of the protease active site of the proenzyme becomes the pyruvoyl prosthetic group, which constitutes an essential element of the active site of the mature decarboxylase.

It localises to the cell membrane. It catalyses the reaction a 1,2-diacyl-sn-glycero-3-phospho-L-serine + H(+) = a 1,2-diacyl-sn-glycero-3-phosphoethanolamine + CO2. It functions in the pathway phospholipid metabolism; phosphatidylethanolamine biosynthesis; phosphatidylethanolamine from CDP-diacylglycerol: step 2/2. Catalyzes the formation of phosphatidylethanolamine (PtdEtn) from phosphatidylserine (PtdSer). The polypeptide is Phosphatidylserine decarboxylase proenzyme (Idiomarina loihiensis (strain ATCC BAA-735 / DSM 15497 / L2-TR)).